A 474-amino-acid chain; its full sequence is MTVPSKTIAPKTLYQKVWDAHIVATPEGEAPIIYVDRHLVHEVTSPQAFSGLKVAGRQLRAPEKTFATMDHNTSTRSASLDALSPMARIQVETLAQNCKDFGVLLYDIHHPNQGIVHVMGPELGITLPGTVIVCGDSHTATHGAFGALAFGIGTSEVEHVLATQTLRQLKAKTMKIEVRGQVTDGVTAKDIVLAIIGKIGMDGGTGYVVEFCGEAIEALSMEGRMTVCNMAIEMGAKAGMVAPDQTTFDYLEGREFAPKGEDWAQAVAEWKTLKTDVGAEFDATVVLDAADIAPQLTWGTNPGQVVAIDAPVPNPADEVNPTIRSSMEKALDYIGLTAGTPMTEVAINKVFIGSCTNSRIEDLRSAAKHAKGRKVAAGVTAIVVPGSGQVKAQAEAEGLDKIFIEAGFEWRLPGCSMCLAMNDDRLEAGDRCASTSNRNFEGRQGRGSRTHLVSPAMAAAAAIAGHFVDIRKPY.

Positions 355, 415, and 418 each coordinate [4Fe-4S] cluster.

Belongs to the aconitase/IPM isomerase family. LeuC type 1 subfamily. As to quaternary structure, heterodimer of LeuC and LeuD. [4Fe-4S] cluster serves as cofactor.

The enzyme catalyses (2R,3S)-3-isopropylmalate = (2S)-2-isopropylmalate. It participates in amino-acid biosynthesis; L-leucine biosynthesis; L-leucine from 3-methyl-2-oxobutanoate: step 2/4. Functionally, catalyzes the isomerization between 2-isopropylmalate and 3-isopropylmalate, via the formation of 2-isopropylmaleate. The chain is 3-isopropylmalate dehydratase large subunit from Shewanella oneidensis (strain ATCC 700550 / JCM 31522 / CIP 106686 / LMG 19005 / NCIMB 14063 / MR-1).